Consider the following 93-residue polypeptide: Pyrimidine/purine nucleoside phosphorylase (93 aa).

The protein belongs to the nucleoside phosphorylase PpnP family.

It carries out the reaction a purine D-ribonucleoside + phosphate = a purine nucleobase + alpha-D-ribose 1-phosphate. It catalyses the reaction adenosine + phosphate = alpha-D-ribose 1-phosphate + adenine. The enzyme catalyses cytidine + phosphate = cytosine + alpha-D-ribose 1-phosphate. The catalysed reaction is guanosine + phosphate = alpha-D-ribose 1-phosphate + guanine. It carries out the reaction inosine + phosphate = alpha-D-ribose 1-phosphate + hypoxanthine. It catalyses the reaction thymidine + phosphate = 2-deoxy-alpha-D-ribose 1-phosphate + thymine. The enzyme catalyses uridine + phosphate = alpha-D-ribose 1-phosphate + uracil. The catalysed reaction is xanthosine + phosphate = alpha-D-ribose 1-phosphate + xanthine. Functionally, catalyzes the phosphorolysis of diverse nucleosides, yielding D-ribose 1-phosphate and the respective free bases. Can use uridine, adenosine, guanosine, cytidine, thymidine, inosine and xanthosine as substrates. Also catalyzes the reverse reactions. The sequence is that of Pyrimidine/purine nucleoside phosphorylase from Photobacterium profundum (strain SS9).